Consider the following 239-residue polypeptide: Protein G1-like8 (239 aa).

2 disordered regions span residues 1–35 (MEGG…RYES) and 149–239 (KARG…ATRV). The span at 9–29 (DAQAQAQPVAQAPPAMQPMQQ) shows a compositional bias: low complexity. One can recognise an ALOG domain in the interval 32–159 (RYESQKRRDW…ARGIPYEKKK (128 aa)). A Nuclear localization signal motif is present at residues 157 to 161 (KKKRK). A compositionally biased stretch (pro residues) spans 167-178 (QPPPQPPLPPQH). Composition is skewed to low complexity over residues 179 to 215 (QPGA…ATSQ) and 223 to 239 (TTTT…ATRV).

This sequence belongs to the plant homeotic and developmental regulators ALOG protein family.

It localises to the nucleus. Probable transcription regulator that acts as a developmental regulator by promoting cell growth in response to light. This Oryza sativa subsp. indica (Rice) protein is Protein G1-like8.